A 337-amino-acid polypeptide reads, in one-letter code: Porphobilinogen deaminase (337 aa).

Cys254 bears the S-(dipyrrolylmethanemethyl)cysteine mark.

The protein belongs to the HMBS family. Requires dipyrromethane as cofactor.

The enzyme catalyses 4 porphobilinogen + H2O = hydroxymethylbilane + 4 NH4(+). The protein operates within porphyrin-containing compound metabolism; protoporphyrin-IX biosynthesis; coproporphyrinogen-III from 5-aminolevulinate: step 2/4. Tetrapolymerization of the monopyrrole PBG into the hydroxymethylbilane pre-uroporphyrinogen in several discrete steps. The sequence is that of Porphobilinogen deaminase (pda-1) from Neurospora crassa (strain ATCC 24698 / 74-OR23-1A / CBS 708.71 / DSM 1257 / FGSC 987).